The chain runs to 105 residues: Thiosulfate sulfurtransferase GlpE (105 aa).

A Rhodanese domain is found at 15-103; it reads MQQGAILVDI…WCRAELPIDT (89 aa). The active-site Cysteine persulfide intermediate is the Cys63.

This sequence belongs to the GlpE family.

The protein localises to the cytoplasm. The enzyme catalyses thiosulfate + hydrogen cyanide = thiocyanate + sulfite + 2 H(+). The catalysed reaction is thiosulfate + [thioredoxin]-dithiol = [thioredoxin]-disulfide + hydrogen sulfide + sulfite + 2 H(+). Transferase that catalyzes the transfer of sulfur from thiosulfate to thiophilic acceptors such as cyanide or dithiols. May function in a CysM-independent thiosulfate assimilation pathway by catalyzing the conversion of thiosulfate to sulfite, which can then be used for L-cysteine biosynthesis. The sequence is that of Thiosulfate sulfurtransferase GlpE from Haemophilus influenzae (strain 86-028NP).